We begin with the raw amino-acid sequence, 130 residues long: Mitochondrial import protein 1 (130 aa).

Residues 1–41 are disordered; the sequence is MSAEEISNPLAESGVTISSDSEQYSAPESASPQSPSSSSPA. A compositionally biased stretch (polar residues) spans 15-24; sequence VTISSDSEQY. A compositionally biased stretch (low complexity) spans 25-41; sequence SAPESASPQSPSSSSPA.

This sequence belongs to the MIM1 family.

Its subcellular location is the mitochondrion outer membrane. Functionally, required for the assembly of the TOM (translocase of outer membrane) receptor complex, which is responsible for the recognition and translocation of cytosolically synthesized mitochondrial preproteins. The polypeptide is Mitochondrial import protein 1 (Neurospora crassa (strain ATCC 24698 / 74-OR23-1A / CBS 708.71 / DSM 1257 / FGSC 987)).